The primary structure comprises 324 residues: Elongation factor P--(R)-beta-lysine ligase (324 aa).

Position 75 to 77 (75 to 77 (SPE)) interacts with substrate. ATP-binding positions include 99–101 (RNE) and asparagine 108. Tyrosine 117 contacts substrate. ATP is bound at residue 243-244 (EL). Glutamate 250 is a substrate binding site. Residue glycine 299 participates in ATP binding.

The protein belongs to the class-II aminoacyl-tRNA synthetase family. EpmA subfamily. Homodimer.

The enzyme catalyses D-beta-lysine + L-lysyl-[protein] + ATP = N(6)-((3R)-3,6-diaminohexanoyl)-L-lysyl-[protein] + AMP + diphosphate + H(+). Its function is as follows. With EpmB is involved in the beta-lysylation step of the post-translational modification of translation elongation factor P (EF-P). Catalyzes the ATP-dependent activation of (R)-beta-lysine produced by EpmB, forming a lysyl-adenylate, from which the beta-lysyl moiety is then transferred to the epsilon-amino group of a conserved specific lysine residue in EF-P. This Vibrio cholerae serotype O1 (strain ATCC 39315 / El Tor Inaba N16961) protein is Elongation factor P--(R)-beta-lysine ligase.